We begin with the raw amino-acid sequence, 112 residues long: Nitrogen regulatory protein P-II (112 aa).

An O-UMP-tyrosine modification is found at tyrosine 51.

This sequence belongs to the P(II) protein family. In terms of assembly, homotrimer.

In terms of biological role, in nitrogen-limiting conditions, when the ratio of Gln to 2-ketoglutarate decreases, P-II is uridylylated to P-II-UMP. P-II-UMP allows the deadenylation of glutamine synthetase (GS), thus activating the enzyme. Conversely, in nitrogen excess P-II is deuridylated and promotes the adenylation of GS. P-II indirectly controls the transcription of the GS gene (glnA). P-II prevents NR-II-catalyzed conversion of NR-I to NR-I-phosphate, the transcriptional activator of glnA. When P-II is uridylylated to P-II-UMP, these events are reversed. This is Nitrogen regulatory protein P-II (glnB) from Mycobacterium bovis (strain ATCC BAA-935 / AF2122/97).